Reading from the N-terminus, the 285-residue chain is 2,3,4,5-tetrahydropyridine-2,6-dicarboxylate N-succinyltransferase (285 aa).

Residues R111 and D148 each contribute to the substrate site.

Belongs to the transferase hexapeptide repeat family. As to quaternary structure, homotrimer.

It localises to the cytoplasm. The catalysed reaction is (S)-2,3,4,5-tetrahydrodipicolinate + succinyl-CoA + H2O = (S)-2-succinylamino-6-oxoheptanedioate + CoA. It participates in amino-acid biosynthesis; L-lysine biosynthesis via DAP pathway; LL-2,6-diaminopimelate from (S)-tetrahydrodipicolinate (succinylase route): step 1/3. The protein is 2,3,4,5-tetrahydropyridine-2,6-dicarboxylate N-succinyltransferase of Sinorhizobium fredii (strain NBRC 101917 / NGR234).